Reading from the N-terminus, the 64-residue chain is Translational regulator CsrA (64 aa).

This sequence belongs to the CsrA/RsmA family. As to quaternary structure, homodimer; the beta-strands of each monomer intercalate to form a hydrophobic core, while the alpha-helices form wings that extend away from the core.

The protein resides in the cytoplasm. Functionally, a key translational regulator that binds mRNA to regulate translation initiation and/or mRNA stability. Mediates global changes in gene expression, shifting from rapid growth to stress survival by linking envelope stress, the stringent response and the catabolite repression systems. Usually binds in the 5'-UTR; binding at or near the Shine-Dalgarno sequence prevents ribosome-binding, repressing translation, binding elsewhere in the 5'-UTR can activate translation and/or stabilize the mRNA. Its function is antagonized by small RNA(s). This chain is Translational regulator CsrA, found in Methylococcus capsulatus (strain ATCC 33009 / NCIMB 11132 / Bath).